A 264-amino-acid polypeptide reads, in one-letter code: tRNA pseudouridine synthase A (264 aa).

The active-site Nucleophile is the D51. Residue Y109 coordinates substrate.

Belongs to the tRNA pseudouridine synthase TruA family. In terms of assembly, homodimer.

It catalyses the reaction uridine(38/39/40) in tRNA = pseudouridine(38/39/40) in tRNA. Functionally, formation of pseudouridine at positions 38, 39 and 40 in the anticodon stem and loop of transfer RNAs. The protein is tRNA pseudouridine synthase A of Actinobacillus succinogenes (strain ATCC 55618 / DSM 22257 / CCUG 43843 / 130Z).